Here is a 106-residue protein sequence, read N- to C-terminus: ATP-dependent Clp protease adapter protein ClpS (106 aa).

The segment at Met-1–Leu-22 is disordered. Positions Lys-9–Gln-20 are enriched in basic and acidic residues.

The protein belongs to the ClpS family. Binds to the N-terminal domain of the chaperone ClpA.

Its function is as follows. Involved in the modulation of the specificity of the ClpAP-mediated ATP-dependent protein degradation. The sequence is that of ATP-dependent Clp protease adapter protein ClpS from Photorhabdus laumondii subsp. laumondii (strain DSM 15139 / CIP 105565 / TT01) (Photorhabdus luminescens subsp. laumondii).